We begin with the raw amino-acid sequence, 433 residues long: Pseudopaline synthase (433 aa).

The helical transmembrane segment at 7–27 (SLGNVLLVGLGAVAIQVALDL) threads the bilayer. NAD(+) is bound by residues 16–19 (LGAV), 39–40 (NH), and threonine 154. Histidine 219 serves as the catalytic Proton donor/acceptor. Residue glutamate 364 participates in NAD(+) binding.

The protein belongs to the staphylopine dehydrogenase family. In terms of assembly, homodimer. Interacts with CntL.

The protein localises to the cell membrane. The catalysed reaction is pseudopaline + NAD(+) + H2O = (2S)-2-amino-4-{[(1S)-1-carboxy-2-(1H-imidazol-4-yl)ethyl]amino}butanoate + 2-oxoglutarate + NADH + H(+). Catalyzes the NADH-dependent reductive condensation of alpha-ketoglutarate to the intermediate formed by the adjacently encoded enzyme CntL, namely (2S)-2-amino-4-{[(1S)-1-carboxy-2-(1H-imidazol-4-yl)ethyl]amino}butanoate, leading to the production of pseudopaline. This is the last step in the biosynthesis of the metallophore pseudopaline, which is involved in the acquisition of nickel and zinc, and thus enables bacterial growth inside the host, where metal access is limited. Therefore, this enzyme probably contributes to Pseudomonas virulence. Can use neither pyruvate nor NADPH in place of alpha-ketoglutarate and NADH, respectively. This chain is Pseudopaline synthase, found in Pseudomonas aeruginosa (strain UCBPP-PA14).